The primary structure comprises 216 residues: MRFFIDTANIEEIKEANDLGVICGVTTNPSLIAKEGRDFIEVVKEISEIVDGPISAEVISLEHKGMIEEAEKLSKIHKNIVIKIPMTAEGLKAVKVLSSKGIKTNVTLIFSAGQALLAARAGATYVSPFVGRLDDISQNGLDLIEEIVDIFSVNSIEAQIIVASVRNPIHVLQAARMGADIATVPLKVINQMIKHPLTDKGIDSFMKDWEGASLKL.

Residue Lys-83 is the Schiff-base intermediate with substrate of the active site.

Belongs to the transaldolase family. Type 3B subfamily.

Its subcellular location is the cytoplasm. It catalyses the reaction D-sedoheptulose 7-phosphate + D-glyceraldehyde 3-phosphate = D-erythrose 4-phosphate + beta-D-fructose 6-phosphate. Its pathway is carbohydrate degradation; pentose phosphate pathway; D-glyceraldehyde 3-phosphate and beta-D-fructose 6-phosphate from D-ribose 5-phosphate and D-xylulose 5-phosphate (non-oxidative stage): step 2/3. Transaldolase is important for the balance of metabolites in the pentose-phosphate pathway. The chain is Probable transaldolase from Clostridioides difficile (strain 630) (Peptoclostridium difficile).